The sequence spans 347 residues: GMP reductase (347 aa).

108 to 131 (AEFEKVKKIMALSEEFVFICIDIA) contributes to the NADP(+) binding site. Positions 181 and 183 each coordinate K(+). The active-site Thioimidate intermediate is the cysteine 186. Position 216–239 (216–239 (IIGDGGCSCAGDVSKAFGGGADFV)) interacts with NADP(+).

The protein belongs to the IMPDH/GMPR family. GuaC type 1 subfamily. In terms of assembly, homotetramer.

The catalysed reaction is IMP + NH4(+) + NADP(+) = GMP + NADPH + 2 H(+). Its function is as follows. Catalyzes the irreversible NADPH-dependent deamination of GMP to IMP. It functions in the conversion of nucleobase, nucleoside and nucleotide derivatives of G to A nucleotides, and in maintaining the intracellular balance of A and G nucleotides. The sequence is that of GMP reductase from Vibrio atlanticus (strain LGP32) (Vibrio splendidus (strain Mel32)).